Consider the following 912-residue polypeptide: MVDYHAANQAYQYGPNSGGGNGAGGGGSMGDYMAQEDDWDRDLLLDPAWEKQQRKTFTAWCNSHLRKAGTQIENIDEDFRDGLKLMLLLEVISGERLPKPERGKMRVHKINNVNKALDFIASKGVKLVSIGAEEIVDGNAKMTLGMIWTIILRFAIQDISVEETSAKEGLLLWCQRKTAPYKNVNVQNFHISWKDGLAFNALIHRHRPELIEYDKLRKDDPVTNLNNAFEVAEKYLDIPKMLDAEDIVNTARPDEKAIMTYVSSFYHAFSGAQKAETAANRICKVLAVNQENEHLMEDYERLASDLLEWIRRTIPWLEDRVPQKTIQEMQQKLEDFRDYRRVHKPPKVQEKCQLEINFNTLQTKLRLSNRPAFMPSEGRMVSDINNGWQHLEQAEKGYEEWLLNEIRRLERLDHLAEKFRQKASIHEAWTDGKEAMLKQRDYETATLSDIKALIRKHEAFESDLAAHQDRVEQIAAIAQELNELDYYDSHNVNTRCQKICDQWDNLGSLTHSRREALEKTEKQLETIDQLHLEYAKRAAPFNNWMESAMEDLQDMFIVHTIEEIEGLISAHDQFKSTLPDADREREAILAIHKEAQRIAESNHIKLSGSNPYTTVTPQIINSKWEKVQQLVPKRDHALLEEQSKQQSNEHLRRQFASQANMVGPWIQTKMEEIGRISIEMNGTLEDQLSHLKQYERSIVDYKPSLDLLEQQHQLIQEALIFDNKHTNYTMEHIRVGWEQLLTTIARTINEVENQILTRDAKGISQEQMQEFRASFNHFDKDHGGALGPEEFKACLISLGYDVENDRQGDAEFNRIMSVVDPNHSGLVTFQAFIDFMSRETTDTDTADQVIASFKVLAGDKNFITAEELRRELPPDQAEYCIARMAPYQGPDAAPGALDYKSFSTALYGESDL.

The tract at residues 1–267 is actin-binding; it reads MVDYHAANQA…IMTYVSSFYH (267 aa). An interaction with VCL region spans residues 12-27; the sequence is QYGPNSGGGNGAGGGG. The tract at residues 12–31 is disordered; that stretch reads QYGPNSGGGNGAGGGGSMGD. Positions 16–29 are enriched in gly residues; the sequence is NSGGGNGAGGGGSM. Residue tyrosine 32 is modified to Phosphotyrosine. Residues 41–62 are interaction with VCL; sequence RDLLLDPAWEKQQRKTFTAWCN. Calponin-homology (CH) domains are found at residues 51 to 155 and 164 to 270; these read KQQR…LRFA and TSAK…HAFS. The short motif at 85-89 is the LXXLL motif element; it reads LMLLL. Residues 109–127 are interaction with VCL; the sequence is KINNVNKALDFIASKGVKL. The residue at position 115 (lysine 115) is an N6-acetyllysine. The interval 178 to 193 is polyphosphoinositide (PIP2)-binding; that stretch reads TAPYKNVNVQNFHISW. N6-acetyllysine is present on lysine 215. Phosphothreonine is present on threonine 250. 4 Spectrin repeats span residues 294 to 404, 414 to 519, 529 to 640, and 650 to 753; these read HLME…WLLN, HLAE…ALEK, QLHL…ALLE, and HLRR…EVEN. N6-acetyllysine occurs at positions 593 and 626. The residue at position 697 (serine 697) is a Phosphoserine. Residues 737–912 form a mediates interaction with MICALL2 region; sequence WEQLLTTIAR…STALYGESDL (176 aa). EF-hand domains lie at 766–801 and 807–842; these read EQMQ…LGYD and QGDA…ETTD. Position 779 (aspartate 779) interacts with Ca(2+). Lysine 780 carries the post-translational modification N6-acetyllysine. Ca(2+) contacts are provided by aspartate 781 and glutamate 790. Lysine 860 carries the N6-acetyllysine modification. Residue serine 910 is modified to Phosphoserine.

This sequence belongs to the alpha-actinin family. Homodimer; antiparallel. Interacts with MAGI1. Interacts with PDLIM2. Identified in a complex with CASK, IQGAP1, MAGI2, NPHS1, SPTAN1 and SPTBN1. Identified in a IGF2BP1-dependent mRNP granule complex containing untranslated mRNAs. Component of the CART complex, at least composed of ACTN4, HGS/HRS, MYO5B and TRIM3. Binds TRIM3 at the N-terminus. Interacts with MICALL2 (preferentially in opened conformation); stimulated by RAB13 activation. Interacts with PPARG and RARA. Binds to VCL; this interaction triggers VCL conformational changes. Interacts with SEPTIN14. Interacts with IGSF8.

The protein resides in the nucleus. It localises to the cytoplasm. The protein localises to the cell junction. It is found in the cytoskeleton. Its subcellular location is the stress fiber. The protein resides in the perinuclear region. In terms of biological role, F-actin cross-linking protein which is thought to anchor actin to a variety of intracellular structures. This is a bundling protein. Probably involved in vesicular trafficking via its association with the CART complex. The CART complex is necessary for efficient transferrin receptor recycling but not for EGFR degradation. Involved in tight junction assembly in epithelial cells probably through interaction with MICALL2. Links MICALL2 to the actin cytoskeleton and recruits it to the tight junctions. May also function as a transcriptional coactivator, stimulating transcription mediated by the nuclear hormone receptors PPARG and RARA. Association with IGSF8 regulates the immune synapse formation and is required for efficient T-cell activation. The sequence is that of Alpha-actinin-4 from Mus musculus (Mouse).